Here is a 1281-residue protein sequence, read N- to C-terminus: Zinc finger transcription factor Trps1 (1281 aa).

2 disordered regions span residues 1 to 101 (MVRK…VSFP) and 116 to 204 (PAAG…KGDL). 2 stretches are compositionally biased toward polar residues: residues 21-31 (LEPTATESKVS) and 40-49 (DQMSENTDQS). A Glycyl lysine isopeptide (Lys-Gly) (interchain with G-Cter in SUMO2) cross-link involves residue K29. A phosphoserine mark is found at S90 and S127. The span at 148 to 162 (LETKEEHKMSPKATE) shows a compositional bias: basic and acidic residues. Positions 166–189 (PVQSGQANCQGLSPVSVASKNPQV) are enriched in polar residues. A phosphoserine mark is found at S178 and S216. Residues 222–247 (FKCNICGYGYYGNDPTDLIKHFRKYH) form a C2H2-type 1; atypical zinc finger. Residue K263 forms a Glycyl lysine isopeptide (Lys-Gly) (interchain with G-Cter in SUMO2) linkage. The segment at 333-358 (FRCKFCNFTYMGNSSTELEQHFLQTH) adopts a C2H2-type 2; atypical zinc-finger fold. A disordered region spans residues 365 to 393 (SLPSSEGVKPSEKNSNKSIPALRASDSGD). Glycyl lysine isopeptide (Lys-Gly) (interchain with G-Cter in SUMO2) cross-links involve residues K418, K457, K474, and K488. Positions 484-515 (NDLAKSVEGEPLTKPEKGLSGAKKKDFPSKGA) are disordered. Residues 488-515 (KSVEGEPLTKPEKGLSGAKKKDFPSKGA) show a composition bias toward basic and acidic residues. The C2H2-type 3; atypical zinc finger occupies 614–637 (HQCHQCSFSTPDVDVLLFHYETVH). The tract at residues 635–819 (TVHESQASDV…SLGLLTPVSS (185 aa)) is mediates interaction with GLI3. K645 participates in a covalent cross-link: Glycyl lysine isopeptide (Lys-Gly) (interchain with G-Cter in SUMO2). 2 consecutive C2H2-type zinc fingers follow at residues 666–689 (HSCT…RRAH) and 692–715 (YKCR…NTVH). Residues K737 and K755 each participate in a glycyl lysine isopeptide (Lys-Gly) (interchain with G-Cter in SUMO2) cross-link. K766 is covalently cross-linked (Glycyl lysine isopeptide (Lys-Gly) (interchain with G-Cter in SUMO1); alternate). K766 is covalently cross-linked (Glycyl lysine isopeptide (Lys-Gly) (interchain with G-Cter in SUMO2); alternate). Glycyl lysine isopeptide (Lys-Gly) (interchain with G-Cter in SUMO2) cross-links involve residues K825 and K850. The disordered stretch occupies residues 856–885 (APAGSEKSASLTQQYPASGESKTKDESQSL). Polar residues predominate over residues 862–871 (KSASLTQQYP). Residues K877 and K879 each participate in a glycyl lysine isopeptide (Lys-Gly) (interchain with G-Cter in SUMO2) cross-link. A GATA-type zinc finger spans residues 896–920 (CANCLTTKTSLWRKNANGGYVCNAC). Residues K925, K937, and K965 each participate in a glycyl lysine isopeptide (Lys-Gly) (interchain with G-Cter in SUMO2) cross-link. Residues 961–977 (EQLNKQQRGSGEEQVNG) show a composition bias toward polar residues. Positions 961-1000 (EQLNKQQRGSGEEQVNGSPLERRSEDHLSESHPREIPLPS) are disordered. S978 is modified (phosphoserine). Residues 980-995 (LERRSEDHLSESHPRE) show a composition bias toward basic and acidic residues. A mediates interaction with RNF4 region spans residues 985 to 1184 (EDHLSESHPR…PTANGASKEK (200 aa)). Glycyl lysine isopeptide (Lys-Gly) (interchain with G-Cter in SUMO2) cross-links involve residues K1003, K1012, K1030, and K1040. The span at 1040 to 1049 (KSPQESTGDP) shows a compositional bias: polar residues. Residues 1040–1078 (KSPQESTGDPGNSSSVSDGKGSSERGSPIEKYMRPAKHP) are disordered. At S1041 the chain carries Phosphoserine. Residues 1050-1059 (GNSSSVSDGK) show a composition bias toward low complexity. Residues 1060–1072 (GSSERGSPIEKYM) show a composition bias toward basic and acidic residues. S1066 carries the phosphoserine modification. K1070 participates in a covalent cross-link: Glycyl lysine isopeptide (Lys-Gly) (interchain with G-Cter in SUMO2). S1085 is subject to Phosphoserine. Residues 1163–1281 (PLDLAIKHSR…QAEKNGKPKE (119 aa)) form a transcriptional repressor domain region. The tract at residues 1169–1195 (KHSRPGPTANGASKEKTKAPPTVKNED) is disordered. Glycyl lysine isopeptide (Lys-Gly) (interchain with G-Cter in SUMO2); alternate cross-links involve residues K1192 and K1201. Glycyl lysine isopeptide (Lys-Gly) (interchain with G-Cter in SUMO); alternate cross-links involve residues K1192 and K1201. K1201 participates in a covalent cross-link: Glycyl lysine isopeptide (Lys-Gly) (interchain with G-Cter in SUMO1); alternate. 2 consecutive C2H2-type zinc fingers follow at residues 1215-1237 (TKCV…MSCH) and 1243-1267 (FQCS…RGLH).

Interacts with RNF4; regulates TRPS1 repressor activity. Interacts specifically with the activator form of GLI3 (GLI3A) but not with the repressor form (GLI3R). Post-translationally, sumoylated. Sumoylation in the repressor domain inhibits the transcription repression activity. Sumoylation on Lys-1201 is the major site. Appears to be sumoylated on multiple sites. In the embryo, expression is detected in both visceral and skeletal tissues. Found in the maxilla, mandible, snout, prospective phalanges and in the femoral head within the developing hip. Also expressed in the hair follicles.

It is found in the nucleus. Its function is as follows. Transcriptional repressor. Binds specifically to GATA sequences and represses expression of GATA-regulated genes at selected sites and stages in vertebrate development. Regulates chondrocyte proliferation and differentiation. Executes multiple functions in proliferating chondrocytes, expanding the region of distal chondrocytes, activating proliferation in columnar cells and supporting the differentiation of columnar into hypertrophic chondrocytes. The chain is Zinc finger transcription factor Trps1 (Trps1) from Mus musculus (Mouse).